The sequence spans 386 residues: Putative 8-amino-7-oxononanoate synthase (386 aa).

Arginine 22 provides a ligand contact to substrate. 109–110 (GY) contacts pyridoxal 5'-phosphate. Substrate is bound at residue histidine 134. Pyridoxal 5'-phosphate is bound by residues serine 182, 207 to 210 (DEAH), and 238 to 241 (TLSK). N6-(pyridoxal phosphate)lysine is present on lysine 241. Threonine 356 provides a ligand contact to substrate.

The protein belongs to the class-II pyridoxal-phosphate-dependent aminotransferase family. BioF subfamily. In terms of assembly, homodimer. Pyridoxal 5'-phosphate serves as cofactor.

The enzyme catalyses 6-carboxyhexanoyl-[ACP] + L-alanine + H(+) = (8S)-8-amino-7-oxononanoate + holo-[ACP] + CO2. It participates in cofactor biosynthesis; biotin biosynthesis. Functionally, catalyzes the decarboxylative condensation of pimeloyl-[acyl-carrier protein] and L-alanine to produce 8-amino-7-oxononanoate (AON), [acyl-carrier protein], and carbon dioxide. This Trichormus variabilis (strain ATCC 29413 / PCC 7937) (Anabaena variabilis) protein is Putative 8-amino-7-oxononanoate synthase (bioF).